We begin with the raw amino-acid sequence, 353 residues long: Hydrazine synthase subunit gamma (353 aa).

The N-terminal stretch at 1-39 (MAREMRLGGKERMKTGVVKIGLVAALGVVGLISAGGVYA) is a signal peptide. Positions 102, 105, and 106 each coordinate heme c. Asp-118, Leu-119, Glu-122, Gly-123, Ser-126, Asn-129, Leu-139, and Pro-141 together coordinate Ca(2+). Cys-165, Cys-225, Cys-228, and His-229 together coordinate heme c. Residues 209-353 (EAQKRGQKIF…QDLVEYLKAL (145 aa)) enclose the Cytochrome c domain. Residues Asp-296, Ser-306, Gly-307, and Thr-308 each contribute to the Ca(2+) site. His-332 contacts heme c.

Part of the hydrazine synthase complex that forms an elongated dimer of heterotrimers composed of one alpha, one beta and one gamma subunit. It depends on heme c as a cofactor.

Its subcellular location is the anammoxosome. It carries out the reaction hydrazine + 3 Fe(III)-[cytochrome c] + H2O = nitric oxide + 3 Fe(II)-[cytochrome c] + NH4(+) + 2 H(+). Its pathway is nitrogen metabolism. In terms of biological role, component of the hydrazine synthase complex that catalyzes the condensation of nitric oxide (NO) with ammonium to form hydrazine. The gamma subunit catalyzes the first half-reaction, i.e. the three-electron reduction of nitric oxide to hydroxylamine; it may obtain electrons from the triheme cytochrome c kuste2854. Is involved in anaerobic ammonium oxidation (anammox), a biological process in which nitrite is used as the electron acceptor in the conversion of ammonium to dinitrogen gas (N2) and water; this bacterial process has a major role in the Earth's nitrogen cycle and has been estimated to synthesize up to 50% of the dinitrogen gas emitted into our atmosphere from the oceans. In Kuenenia stuttgartiensis, this protein is Hydrazine synthase subunit gamma.